Here is a 470-residue protein sequence, read N- to C-terminus: ATP synthase subunit beta (470 aa).

Position 157 to 164 (157 to 164 (GGAGVGKT)) interacts with ATP.

This sequence belongs to the ATPase alpha/beta chains family. In terms of assembly, F-type ATPases have 2 components, CF(1) - the catalytic core - and CF(0) - the membrane proton channel. CF(1) has five subunits: alpha(3), beta(3), gamma(1), delta(1), epsilon(1). CF(0) has three main subunits: a(1), b(2) and c(9-12). The alpha and beta chains form an alternating ring which encloses part of the gamma chain. CF(1) is attached to CF(0) by a central stalk formed by the gamma and epsilon chains, while a peripheral stalk is formed by the delta and b chains.

It localises to the cell inner membrane. It catalyses the reaction ATP + H2O + 4 H(+)(in) = ADP + phosphate + 5 H(+)(out). In terms of biological role, produces ATP from ADP in the presence of a proton gradient across the membrane. The catalytic sites are hosted primarily by the beta subunits. In Geotalea uraniireducens (strain Rf4) (Geobacter uraniireducens), this protein is ATP synthase subunit beta.